We begin with the raw amino-acid sequence, 516 residues long: MGDPSKQDILTIFKRLRSVPTNKVCFDCGAKNPSWASITYGVFLCIDCSGSHRSLGVHLSFIRSTELDSNWSWFQLRCMQVGGNANASSFFHQHGCSTSDTNAKYNSRAAQLYREKIKSLASQATRKHGTDLWLDSCVVPPLSPPPKEEDFFASHVSPEVSDTAWASAIAEPSSLTSRPVETTLENNEGGQEQGPSVEGLNVPSKAALEVSSIIKKKPNQAKKGLGAKKGSLGAQKLANTCFNEIEKQAQAADKMKEQEDLAKAAPKEESIVSSLRLAYKDLEIQMKKDEKLNISGKKNVDSDRLGMGFGNCRSGISHSVTSDMQTIEQESPIMAKPRKKYNDDSDDSYFTSSSRYFDEAVELRSSSFSSWDDSSDSYWKKETSKDTETILKTTGYSDRPTARRKPDYEPVENTDEAQKKFGNVKAISSDMYFGRQAQADYETRARLERLSASSSISSADLFEEQRKQAAGNYSLSNVLPSAPNMAQFKQGVRSVAGKLSVFANGVVTSIQDRYGS.

Positions 10–126 constitute an Arf-GAP domain; the sequence is LTIFKRLRSV…IKSLASQATR (117 aa). The C4-type zinc-finger motif lies at 25–48; that stretch reads CFDCGAKNPSWASITYGVFLCIDC. The tract at residues 170 to 199 is disordered; that stretch reads AEPSSLTSRPVETTLENNEGGQEQGPSVEG. Residues 173-194 are compositionally biased toward polar residues; the sequence is SSLTSRPVETTLENNEGGQEQG. At S231 the chain carries Phosphoserine. The stretch at 243–264 forms a coiled coil; that stretch reads NEIEKQAQAADKMKEQEDLAKA. Residues S270, S274, S331, and S370 each carry the phosphoserine modification. The disordered stretch occupies residues 392–414; the sequence is KTTGYSDRPTARRKPDYEPVENT. 6 positions are modified to phosphoserine: S428, S451, S453, S455, S457, and S458.

The protein resides in the cytoplasm. Its subcellular location is the golgi apparatus membrane. GAP activity stimulated by phosphatidylinositol 4,5-bisphosphate (PIP2). Its function is as follows. GTPase-activating protein (GAP) for ADP ribosylation factor 1 (ARF1). Hydrolysis of ARF1-bound GTP may lead to dissociation of coatomer from Golgi-derived membranes to allow fusion with target membranes. This Macaca fascicularis (Crab-eating macaque) protein is ADP-ribosylation factor GTPase-activating protein 3.